A 390-amino-acid chain; its full sequence is Lipid-A-disaccharide synthase (390 aa).

Belongs to the LpxB family.

It catalyses the reaction a lipid X + a UDP-2-N,3-O-bis[(3R)-3-hydroxyacyl]-alpha-D-glucosamine = a lipid A disaccharide + UDP + H(+). Its pathway is bacterial outer membrane biogenesis; LPS lipid A biosynthesis. Condensation of UDP-2,3-diacylglucosamine and 2,3-diacylglucosamine-1-phosphate to form lipid A disaccharide, a precursor of lipid A, a phosphorylated glycolipid that anchors the lipopolysaccharide to the outer membrane of the cell. This Paramagnetospirillum magneticum (strain ATCC 700264 / AMB-1) (Magnetospirillum magneticum) protein is Lipid-A-disaccharide synthase.